The primary structure comprises 283 residues: Orotidine 5'-phosphate decarboxylase (283 aa).

The active-site Proton donor is Lys-97.

It belongs to the OMP decarboxylase family. Type 2 subfamily.

The catalysed reaction is orotidine 5'-phosphate + H(+) = UMP + CO2. It functions in the pathway pyrimidine metabolism; UMP biosynthesis via de novo pathway; UMP from orotate: step 2/2. This chain is Orotidine 5'-phosphate decarboxylase, found in Clostridium botulinum (strain ATCC 19397 / Type A).